Reading from the N-terminus, the 366-residue chain is Polyamine aminopropyltransferase 2 (366 aa).

A compositionally biased stretch (basic and acidic residues) spans 20–58 (KDKRSELDSDKFELEQQDKHDIQDKQDKQDEQNKQDKQV). The interval 20–61 (KDKRSELDSDKFELEQQDKHDIQDKQDKQDEQNKQDKQVQSE) is disordered. Residues 74 to 305 (DVWDEISLKE…TDWGFHLATN (232 aa)) enclose the PABS domain. Residue glutamine 100 participates in S-methyl-5'-thioadenosine binding. Positions 129 and 153 each coordinate spermidine. S-methyl-5'-thioadenosine-binding positions include aspartate 173 and 207 to 208 (DA). Residue aspartate 225 is the Proton acceptor of the active site.

This sequence belongs to the spermidine/spermine synthase family. As to quaternary structure, homodimer or homotetramer.

The protein resides in the cytoplasm. The enzyme catalyses S-adenosyl 3-(methylsulfanyl)propylamine + putrescine = S-methyl-5'-thioadenosine + spermidine + H(+). It participates in amine and polyamine biosynthesis; spermidine biosynthesis; spermidine from putrescine: step 1/1. Its function is as follows. Catalyzes the irreversible transfer of a propylamine group from the amino donor S-adenosylmethioninamine (decarboxy-AdoMet) to putrescine (1,4-diaminobutane) to yield spermidine. This is Polyamine aminopropyltransferase 2 from Bacillus cereus (strain ATCC 14579 / DSM 31 / CCUG 7414 / JCM 2152 / NBRC 15305 / NCIMB 9373 / NCTC 2599 / NRRL B-3711).